We begin with the raw amino-acid sequence, 252 residues long: GTP cyclohydrolase 1 type 2 homolog (252 aa).

Residues H63, H64, D101, H220, and E224 each contribute to the a divalent metal cation site.

It belongs to the GTP cyclohydrolase I type 2/NIF3 family. Homohexamer.

This Vibrio cholerae serotype O1 (strain ATCC 39315 / El Tor Inaba N16961) protein is GTP cyclohydrolase 1 type 2 homolog.